Consider the following 842-residue polypeptide: Amyloid-beta A4 precursor protein-binding family A member 1 (842 aa).

3 disordered regions span residues 1 to 121 (MNHL…DESA), 238 to 349 (RLHH…EKRD), and 366 to 439 (KTRT…KESR). Phosphoserine is present on Ser82. 2 stretches are compositionally biased toward basic and acidic residues: residues 106–115 (DGYEAERAQD) and 240–258 (HHYDERSDGESDSPEKEAE). Residues Ser246, Ser250, Ser252, Ser267, Ser284, and Ser289 each carry the phosphoserine modification. Residue Thr309 is modified to Phosphothreonine. 2 positions are modified to phosphoserine: Ser317 and Ser372. Position 375 is a phosphothreonine (Thr375). The span at 392 to 403 (PTRDCDDQRPVD) shows a compositional bias: basic and acidic residues. The span at 404-421 (GDSPSPGSSSPLGAESSS) shows a compositional bias: low complexity. Residues Ser406, Ser408, Ser413, and Ser573 each carry the phosphoserine modification. The PID domain occupies 460-648 (LIDGIIFAAN…LLNTQDMYND (189 aa)). The interval 631–648 (LSQKEYSDLLNTQDMYND) is autoinhibitory helix linker. PDZ domains follow at residues 661 to 746 (DVFI…NIVR) and 752 to 828 (TVLI…MPAA).

Part of a multimeric complex containing STXBP1 and STX1A. Interacts with STXBP1. Component of the brain-specific heterotrimeric complex (LIN-10-LIN-2-LIN-7 complex) composed of at least APBA1, CASK, and LIN7, which associates with the motor protein KIF17 to transport vesicles along microtubules. Within the complex, interacts (via PDZ domain) with the motor protein KIF17; the interaction is direct and is required for association of KIF17 with the cargo that is to be transported. Binds to the cytoplasmic domain of amyloid protein (APP). Interacts (via PDZ 1 and 2 domains) with FSPB. Isoform 3 interacts (via its truncated PID domain) with active, GTP-bound RAB6A. Also interacts with GTP-bound RAB6B. Isoform 3 is expressed in brain.

Its subcellular location is the cytoplasm. The protein localises to the perinuclear region. It is found in the nucleus. It localises to the golgi apparatus. Putative function in synaptic vesicle exocytosis by binding to Munc18-1, an essential component of the synaptic vesicle exocytotic machinery. May modulate processing of the amyloid-beta precursor protein (APP) and hence formation of AAP-beta. Component of the LIN-10-LIN-2-LIN-7 complex, which associates with the motor protein KIF17 to transport vesicles containing N-methyl-D-aspartate (NMDA) receptor subunit NR2B along microtubules. The protein is Amyloid-beta A4 precursor protein-binding family A member 1 of Mus musculus (Mouse).